The chain runs to 100 residues: NADH-quinone oxidoreductase subunit K (100 aa).

Transmembrane regions (helical) follow at residues 3 to 23, 29 to 49, and 63 to 83; these read PTAY…IGVL, IMIF…LVAF, and FIVM…IVAI.

Belongs to the complex I subunit 4L family. In terms of assembly, NDH-1 is composed of 15 different subunits. Subunits NuoA, H, J, K, L, M, N constitute the membrane sector of the complex.

It is found in the cell membrane. The catalysed reaction is a quinone + NADH + 5 H(+)(in) = a quinol + NAD(+) + 4 H(+)(out). Its function is as follows. NDH-1 shuttles electrons from NADH, via FMN and iron-sulfur (Fe-S) centers, to quinones in the respiratory chain. The immediate electron acceptor for the enzyme in this species is believed to be a menaquinone. Couples the redox reaction to proton translocation (for every two electrons transferred, four hydrogen ions are translocated across the cytoplasmic membrane), and thus conserves the redox energy in a proton gradient. The chain is NADH-quinone oxidoreductase subunit K from Deinococcus geothermalis (strain DSM 11300 / CIP 105573 / AG-3a).